The sequence spans 244 residues: Ubiquinone biosynthesis O-methyltransferase (244 aa).

S-adenosyl-L-methionine-binding residues include R36, G60, D81, and L123.

The protein belongs to the methyltransferase superfamily. UbiG/COQ3 family.

It carries out the reaction a 3-demethylubiquinol + S-adenosyl-L-methionine = a ubiquinol + S-adenosyl-L-homocysteine + H(+). The catalysed reaction is a 3-(all-trans-polyprenyl)benzene-1,2-diol + S-adenosyl-L-methionine = a 2-methoxy-6-(all-trans-polyprenyl)phenol + S-adenosyl-L-homocysteine + H(+). It participates in cofactor biosynthesis; ubiquinone biosynthesis. In terms of biological role, O-methyltransferase that catalyzes the 2 O-methylation steps in the ubiquinone biosynthetic pathway. This Rickettsia felis (strain ATCC VR-1525 / URRWXCal2) (Rickettsia azadi) protein is Ubiquinone biosynthesis O-methyltransferase.